Reading from the N-terminus, the 453-residue chain is Cytochrome b-c1 complex subunit 2, mitochondrial (453 aa).

The N-terminal 14 residues, Met-1–Tyr-14, are a transit peptide targeting the mitochondrion. N6-acetyllysine occurs at positions 66, 199, and 250.

It belongs to the peptidase M16 family. UQCRC2/QCR2 subfamily. In terms of assembly, component of the ubiquinol-cytochrome c oxidoreductase (cytochrome b-c1 complex, complex III, CIII), a multisubunit enzyme composed of 11 subunits. The complex is composed of 3 respiratory subunits cytochrome b, cytochrome c1 and Rieske protein UQCRFS1, 2 core protein subunits UQCRC1/QCR1 and UQCRC2/QCR2, and 6 low-molecular weight protein subunits UQCRH/QCR6, UQCRB/QCR7, UQCRQ/QCR8, UQCR10/QCR9, UQCR11/QCR10 and subunit 9, the cleavage product of Rieske protein UQCRFS1. The complex exists as an obligatory dimer and forms supercomplexes (SCs) in the inner mitochondrial membrane with NADH-ubiquinone oxidoreductase (complex I, CI) and cytochrome c oxidase (complex IV, CIV), resulting in different assemblies (supercomplex SCI(1)III(2)IV(1) and megacomplex MCI(2)III(2)IV(2)). Interacts with RAB5IF. Interacts with STMP1.

Its subcellular location is the mitochondrion inner membrane. Its function is as follows. Component of the ubiquinol-cytochrome c oxidoreductase, a multisubunit transmembrane complex that is part of the mitochondrial electron transport chain which drives oxidative phosphorylation. The respiratory chain contains 3 multisubunit complexes succinate dehydrogenase (complex II, CII), ubiquinol-cytochrome c oxidoreductase (cytochrome b-c1 complex, complex III, CIII) and cytochrome c oxidase (complex IV, CIV), that cooperate to transfer electrons derived from NADH and succinate to molecular oxygen, creating an electrochemical gradient over the inner membrane that drives transmembrane transport and the ATP synthase. The cytochrome b-c1 complex catalyzes electron transfer from ubiquinol to cytochrome c, linking this redox reaction to translocation of protons across the mitochondrial inner membrane, with protons being carried across the membrane as hydrogens on the quinol. In the process called Q cycle, 2 protons are consumed from the matrix, 4 protons are released into the intermembrane space and 2 electrons are passed to cytochrome c. The 2 core subunits UQCRC1/QCR1 and UQCRC2/QCR2 are homologous to the 2 mitochondrial-processing peptidase (MPP) subunits beta-MPP and alpha-MPP respectively, and they seem to have preserved their MPP processing properties. May be involved in the in situ processing of UQCRFS1 into the mature Rieske protein and its mitochondrial targeting sequence (MTS)/subunit 9 when incorporated into complex III. The protein is Cytochrome b-c1 complex subunit 2, mitochondrial (UQCRC2) of Homo sapiens (Human).